Reading from the N-terminus, the 324-residue chain is MLEQVILFTILMGFLISVLLSPILIPFLRRLKFGQSIREEGPKSHQKKSGTPTMGGVMIILSIIVTTIVMTQKFSEISPEMVLLLFVTLGYGLLGFLDDYIKVVMKRNLGLTSKQKLIGQIIIAVVFYAVYHYYNFATDIRIPGTDLSFDLGWAYFILVLFMLVGGSNAVNLTDGLDGLLSGTAAIAFGAFAILAWNQSQYDVAIFSVAVVGAVLGFLVFNAHPAKVFMGDTGSLALGGAIVTIAILTKLEILLVIIGGVFVIETLSVILQVISFKTTGKRIFKMSPLHHHYELVGWSEWRVVVTFWAAGLLLAVLGIYIEVWL.

The next 10 membrane-spanning stretches (helical) occupy residues 5-25 (VILF…PILI), 50-70 (GTPT…TIVM), 77-97 (ISPE…LGFL), 117-137 (LIGQ…YNFA), 147-167 (LSFD…VGGS), 176-196 (LDGL…ILAW), 203-223 (VAIF…FNAH), 227-247 (VFMG…IAIL), 250-270 (LEIL…SVIL), and 302-322 (VVVT…YIEV).

This sequence belongs to the glycosyltransferase 4 family. MraY subfamily. The cofactor is Mg(2+).

It is found in the cell membrane. The catalysed reaction is UDP-N-acetyl-alpha-D-muramoyl-L-alanyl-gamma-D-glutamyl-meso-2,6-diaminopimeloyl-D-alanyl-D-alanine + di-trans,octa-cis-undecaprenyl phosphate = di-trans,octa-cis-undecaprenyl diphospho-N-acetyl-alpha-D-muramoyl-L-alanyl-D-glutamyl-meso-2,6-diaminopimeloyl-D-alanyl-D-alanine + UMP. It functions in the pathway cell wall biogenesis; peptidoglycan biosynthesis. Catalyzes the initial step of the lipid cycle reactions in the biosynthesis of the cell wall peptidoglycan: transfers peptidoglycan precursor phospho-MurNAc-pentapeptide from UDP-MurNAc-pentapeptide onto the lipid carrier undecaprenyl phosphate, yielding undecaprenyl-pyrophosphoryl-MurNAc-pentapeptide, known as lipid I. The sequence is that of Phospho-N-acetylmuramoyl-pentapeptide-transferase from Bacillus subtilis (strain 168).